Consider the following 673-residue polypeptide: ATP-dependent DNA helicase Rep (673 aa).

A UvrD-like helicase ATP-binding domain is found at 1-280 (MRLNPGQQQA…IKLEQNYRSS (280 aa)). ATP is bound by residues 22 to 29 (AGAGSGKT) and arginine 278. A UvrD-like helicase C-terminal domain is found at 281–562 (GRILKAANIL…QLMTLHASKG (282 aa)).

It belongs to the helicase family. UvrD subfamily. As to quaternary structure, homodimer in association with DNA.

It catalyses the reaction Couples ATP hydrolysis with the unwinding of duplex DNA by translocating in the 3'-5' direction.. The enzyme catalyses ATP + H2O = ADP + phosphate + H(+). Its activity is regulated as follows. Binding to DNA induces dimerization, which is required for DNA helicase activity. Helicase activity is stimulated by PriC. Its function is as follows. Rep helicase is a single-stranded (ss)DNA-dependent ATPase involved in DNA replication; it can initiate unwinding at a nick in the DNA. It binds to ssDNA and acts in a progressive fashion along the DNA in the 3' to 5' direction. Binds double-stranded (ds)DNA with a 5' ss- but not 3' ss-extension and forked structures with either lagging or leading ssDNA. Part of the PriC-Rep pathway for restart of stalled replication forks, which reloads the DnaB replicative helicase on sites other than the origin of replication. This is ATP-dependent DNA helicase Rep from Escherichia coli (strain K12).